Consider the following 528-residue polypeptide: Peptide chain release factor 3 (528 aa).

The 269-residue stretch at 11 to 279 (NKRRTFAIIS…GIVEWAPKPL (269 aa)) folds into the tr-type G domain. Residues 20-27 (SHPDAGKT), 88-92 (DTPGH), and 142-145 (NKLD) each bind GTP.

Belongs to the TRAFAC class translation factor GTPase superfamily. Classic translation factor GTPase family. PrfC subfamily.

It localises to the cytoplasm. Its function is as follows. Increases the formation of ribosomal termination complexes and stimulates activities of RF-1 and RF-2. It binds guanine nucleotides and has strong preference for UGA stop codons. It may interact directly with the ribosome. The stimulation of RF-1 and RF-2 is significantly reduced by GTP and GDP, but not by GMP. This is Peptide chain release factor 3 from Shewanella sp. (strain W3-18-1).